We begin with the raw amino-acid sequence, 320 residues long: Methionyl-tRNA formyltransferase (320 aa).

112 to 115 is a (6S)-5,6,7,8-tetrahydrofolate binding site; that stretch reads SLLP.

This sequence belongs to the Fmt family.

The catalysed reaction is L-methionyl-tRNA(fMet) + (6R)-10-formyltetrahydrofolate = N-formyl-L-methionyl-tRNA(fMet) + (6S)-5,6,7,8-tetrahydrofolate + H(+). Its function is as follows. Attaches a formyl group to the free amino group of methionyl-tRNA(fMet). The formyl group appears to play a dual role in the initiator identity of N-formylmethionyl-tRNA by promoting its recognition by IF2 and preventing the misappropriation of this tRNA by the elongation apparatus. The sequence is that of Methionyl-tRNA formyltransferase from Allorhizobium ampelinum (strain ATCC BAA-846 / DSM 112012 / S4) (Agrobacterium vitis (strain S4)).